We begin with the raw amino-acid sequence, 627 residues long: Membrane protein insertase YidC (627 aa).

A helical transmembrane segment spans residues Leu-8–Pro-28. Residues Lys-33–Gly-57 show a composition bias toward polar residues. Residues Lys-33–Val-68 are disordered. The segment covering Lys-58–Val-68 has biased composition (basic and acidic residues). A run of 4 helical transmembrane segments spans residues Phe-417–Phe-437, Val-488–Phe-508, Ala-536–Gly-556, and Met-575–Val-595.

This sequence belongs to the OXA1/ALB3/YidC family. Type 1 subfamily. Interacts with the Sec translocase complex via SecD. Specifically interacts with transmembrane segments of nascent integral membrane proteins during membrane integration.

It localises to the cell inner membrane. Required for the insertion and/or proper folding and/or complex formation of integral membrane proteins into the membrane. Involved in integration of membrane proteins that insert both dependently and independently of the Sec translocase complex, as well as at least some lipoproteins. Aids folding of multispanning membrane proteins. This is Membrane protein insertase YidC from Leptospira interrogans serogroup Icterohaemorrhagiae serovar copenhageni (strain Fiocruz L1-130).